A 92-amino-acid polypeptide reads, in one-letter code: UPF0250 protein VP0718 (92 aa).

Belongs to the UPF0250 family.

This Vibrio parahaemolyticus serotype O3:K6 (strain RIMD 2210633) protein is UPF0250 protein VP0718.